Here is a 316-residue protein sequence, read N- to C-terminus: Protoheme IX farnesyltransferase (316 aa).

Helical transmembrane passes span 28–48 (IIPL…KGQV), 50–70 (PLLL…AQTL), 99–119 (HALI…VFFV), 122–142 (LSGF…THLL), 150–170 (IVIG…AVTG), 178–198 (ILFA…ALMI), 223–243 (IWLY…PLAA), 244–264 (CGVV…KKAW), and 293–313 (AMVI…ASLF).

It belongs to the UbiA prenyltransferase family. Protoheme IX farnesyltransferase subfamily.

The protein localises to the cell inner membrane. The catalysed reaction is heme b + (2E,6E)-farnesyl diphosphate + H2O = Fe(II)-heme o + diphosphate. Its pathway is porphyrin-containing compound metabolism; heme O biosynthesis; heme O from protoheme: step 1/1. Its function is as follows. Converts heme B (protoheme IX) to heme O by substitution of the vinyl group on carbon 2 of heme B porphyrin ring with a hydroxyethyl farnesyl side group. This chain is Protoheme IX farnesyltransferase, found in Microcystis aeruginosa (strain NIES-843 / IAM M-2473).